The chain runs to 68 residues: uncharacterized protein (68 aa).

Positions 1–15 (MTIIFLICLDASTQS) are cleaved as a signal peptide. The tract at residues 14-68 (QSTTNNSINNNNNNNNNNNNNNNNNNNNNNNNNNNNNNNNNNNNNNSKVFDFNIF) is disordered. 2 N-linked (GlcNAc...) asparagine glycosylation sites follow: Asn-18 and Asn-58. The span at 22–59 (NNNNNNNNNNNNNNNNNNNNNNNNNNNNNNNNNNNNNN) shows a compositional bias: low complexity.

The protein localises to the secreted. This is an uncharacterized protein from Dictyostelium discoideum (Social amoeba).